Reading from the N-terminus, the 429-residue chain is Histidine--tRNA ligase (429 aa).

It belongs to the class-II aminoacyl-tRNA synthetase family. As to quaternary structure, homodimer.

It is found in the cytoplasm. The catalysed reaction is tRNA(His) + L-histidine + ATP = L-histidyl-tRNA(His) + AMP + diphosphate + H(+). The polypeptide is Histidine--tRNA ligase (Streptococcus pneumoniae (strain CGSP14)).